The following is a 512-amino-acid chain: Sodium/proline symporter (512 aa).

Transmembrane regions (helical) follow at residues 16-36 (WQTY…GFYG), 54-74 (IGPY…WMIM), 85-105 (LSAM…YFVV), 139-159 (IISG…GFVS), 174-194 (FGLI…GYLA), 200-220 (FFQG…AMMN), 240-260 (LFKG…LGYF), 286-306 (ISWM…GIAF), 327-347 (VLFH…AIMS), 381-401 (FVMI…AIAW), 410-430 (LVGN…LFAL), 438-458 (AGAV…IAWI), and 467-487 (IFGL…TYVV).

This sequence belongs to the sodium:solute symporter (SSF) (TC 2.A.21) family.

It localises to the cell membrane. It carries out the reaction L-proline(in) + Na(+)(in) = L-proline(out) + Na(+)(out). Catalyzes the sodium-dependent uptake of extracellular L-proline. Since most S.aureus strains are L-proline auxotrophs, this transporter may aid the bacterial persistence during an infection of tissues with low proline concentrations. In Staphylococcus aureus (strain Newman), this protein is Sodium/proline symporter (putP).